Reading from the N-terminus, the 712-residue chain is MQHKTQLTLSFLLSQVLLLACAEDLECTPGFQQKVFYIEQPFEFTEDQPILNLVFDDCKGNNKLNFEVSNPDFKVEHDGSLVALKNVSEAGRALFVHARSEHAEDMAEILIVGADEKHDALKEIFKIEGNLGIPRQKRAILATPILIPENQRPPFPRSVGKVIRSEGTEGAKFRLSGKGVDQDPKGIFRINEISGDVSVTRPLDREAIANYELEVEVTDLSGKIIDGPVRLDISVIDQNDNRPMFKEGPYVGHVMEGSPTGTTVMRMTAFDADDPSTDNALLRYNILKQTPTKPSPNMFYIDPEKGDIVTVVSPVLLDRETMETPKYELVIEAKDMGGHDVGLTGTATATILIDDKNDHPPEFTKKEFQATVKEGVTGVIVNLTVGDRDDPATGAWRAVYTIINGNPGQSFEIHTNPQTNEGMLSVVKPLDYEISAFHTLLIKVENEDPLIPDIAYGPSSTATVQITVEDVNEGPVFHPNPMTVTKQENIPIGSIVLTVNATDPDTLQHQTIRYSVYKDPASWLEINPTNGTVATTAVLDRESPHVQDNKYTALFLAIDSGNPPATGTGTLHITLEDVNDNVPSLYPTLAKVCDDAKDLRVVVLGASDKDLHPNTDPFKFELSKQSGPEKLWRINKLNNTHAQVVLLQNLKKANYNIPISVTDSGKPPLTNNTELKLQVCSCKKSRMDCSASDALHISMTLILLSLFSLFCL.

The first 22 residues, M1–A22, serve as a signal peptide directing secretion. Positions E23–R138 are excised as a propeptide. N-linked (GlcNAc...) asparagine glycosylation is present at N86. Cadherin domains are found at residues T143–F245, K246–F363, T364–F477, H478–L585, and Y586–C680. Residues N382, N500, N530, N638, and N671 are each glycosylated (N-linked (GlcNAc...) asparagine). The GPI-anchor amidated aspartate moiety is linked to residue D693. Positions A694 to L712 are cleaved as a propeptide — removed in mature form.

By contrast to classical cadherins, homodimerization in trans is not mediated by cadherin EC1 domain strand-swapping, but instead through a homophilic adhesive interface which joins two elongated EC1-EC2 domains through a region near their Ca2+-binding sites to form a tetrahedral, X-like shape. In terms of tissue distribution, neural tissues. Also found in muscles; kidney and retina.

It is found in the cell membrane. It localises to the cytoplasm. Its function is as follows. Cadherins are calcium-dependent cell adhesion proteins. They preferentially interact with themselves in a homophilic manner in connecting cells; cadherins may thus contribute to the sorting of heterogeneous cell types. May act as a negative regulator of neural cell growth. The sequence is that of Cadherin-13 (CDH13) from Gallus gallus (Chicken).